A 142-amino-acid chain; its full sequence is ATP synthase epsilon chain (142 aa).

Belongs to the ATPase epsilon chain family. F-type ATPases have 2 components, CF(1) - the catalytic core - and CF(0) - the membrane proton channel. CF(1) has five subunits: alpha(3), beta(3), gamma(1), delta(1), epsilon(1). CF(0) has three main subunits: a, b and c.

Its subcellular location is the cell inner membrane. Produces ATP from ADP in the presence of a proton gradient across the membrane. The polypeptide is ATP synthase epsilon chain (Shewanella frigidimarina (strain NCIMB 400)).